The chain runs to 380 residues: Outer membrane protein assembly factor BamB (380 aa).

A signal peptide spans 1-18 (MVQWKHAALLALALAVVG). A lipid anchor (N-palmitoyl cysteine) is attached at Cys-19. A lipid anchor (S-diacylglycerol cysteine) is attached at Cys-19.

This sequence belongs to the BamB family. As to quaternary structure, part of the Bam complex.

It is found in the cell outer membrane. In terms of biological role, part of the outer membrane protein assembly complex, which is involved in assembly and insertion of beta-barrel proteins into the outer membrane. In Pseudomonas aeruginosa (strain ATCC 15692 / DSM 22644 / CIP 104116 / JCM 14847 / LMG 12228 / 1C / PRS 101 / PAO1), this protein is Outer membrane protein assembly factor BamB.